A 547-amino-acid polypeptide reads, in one-letter code: Chaperonin GroEL (547 aa).

ATP contacts are provided by residues 30-33 (TLGP), Lys51, 87-91 (DGTTT), Gly415, and Asp496.

Belongs to the chaperonin (HSP60) family. Forms a cylinder of 14 subunits composed of two heptameric rings stacked back-to-back. Interacts with the co-chaperonin GroES.

The protein resides in the cytoplasm. It carries out the reaction ATP + H2O + a folded polypeptide = ADP + phosphate + an unfolded polypeptide.. Its function is as follows. Together with its co-chaperonin GroES, plays an essential role in assisting protein folding. The GroEL-GroES system forms a nano-cage that allows encapsulation of the non-native substrate proteins and provides a physical environment optimized to promote and accelerate protein folding. In Mannheimia succiniciproducens (strain KCTC 0769BP / MBEL55E), this protein is Chaperonin GroEL.